We begin with the raw amino-acid sequence, 156 residues long: Small ribosomal subunit protein uS7 (156 aa).

Belongs to the universal ribosomal protein uS7 family. As to quaternary structure, part of the 30S ribosomal subunit. Contacts proteins S9 and S11.

One of the primary rRNA binding proteins, it binds directly to 16S rRNA where it nucleates assembly of the head domain of the 30S subunit. Is located at the subunit interface close to the decoding center, probably blocks exit of the E-site tRNA. The sequence is that of Small ribosomal subunit protein uS7 from Finegoldia magna (strain ATCC 29328 / DSM 20472 / WAL 2508) (Peptostreptococcus magnus).